We begin with the raw amino-acid sequence, 192 residues long: Flavin prenyltransferase UbiX (192 aa).

FMN-binding positions include Gly10 to Ser12, Ser36, Ser92 to Thr95, and Arg127. Residues Tyr157 and Lys173 each contribute to the dimethylallyl phosphate site.

Belongs to the UbiX/PAD1 family.

The catalysed reaction is dimethylallyl phosphate + FMNH2 = prenylated FMNH2 + phosphate. Flavin prenyltransferase that catalyzes the synthesis of the prenylated FMN cofactor (prenyl-FMN) for 4-hydroxy-3-polyprenylbenzoic acid decarboxylase UbiD. The prenyltransferase is metal-independent and links a dimethylallyl moiety from dimethylallyl monophosphate (DMAP) to the flavin N5 and C6 atoms of FMN. The protein is Flavin prenyltransferase UbiX of Chlamydia pneumoniae (Chlamydophila pneumoniae).